The primary structure comprises 459 residues: tRNA(Ile2) 2-agmatinylcytidine synthetase TiaS (459 aa).

Residues 282–360 (VRVRVWVASI…TINLEKLHII (79 aa)) constitute a DNA-binding region (OB).

The protein belongs to the TiaS family.

It is found in the cytoplasm. It catalyses the reaction cytidine(34) in tRNA(Ile2) + agmatine + ATP + H2O = 2-agmatinylcytidine(34) in tRNA(Ile2) + AMP + 2 phosphate + 2 H(+). Functionally, ATP-dependent agmatine transferase that catalyzes the formation of 2-agmatinylcytidine (agm2C) at the wobble position (C34) of tRNA(Ile2), converting the codon specificity from AUG to AUA. The polypeptide is tRNA(Ile2) 2-agmatinylcytidine synthetase TiaS (Staphylothermus marinus (strain ATCC 43588 / DSM 3639 / JCM 9404 / F1)).